Consider the following 248-residue polypeptide: Tyrosine recombinase XerD-like (248 aa).

The Core-binding (CB) domain maps to 1–72 (MKSYIEPFIA…TANQFLYYLY (72 aa)). A Tyr recombinase domain is found at 85 to 248 (DTMKVMRTEK…PVTLEKYYKS (164 aa)). Active-site residues include lysine 149 and arginine 213. Tyrosine 245 (O-(3'-phospho-DNA)-tyrosine intermediate) is an active-site residue.

The protein belongs to the 'phage' integrase family. XerD-like subfamily.

The protein resides in the cytoplasm. Functionally, putative tyrosine recombinase. Not involved in the cutting and rejoining of the recombining DNA molecules on dif(SL) site. In Streptococcus pyogenes serotype M28 (strain MGAS6180), this protein is Tyrosine recombinase XerD-like.